A 140-amino-acid chain; its full sequence is Nucleoside diphosphate kinase (140 aa).

Residues K11, F59, R87, T93, R104, and N114 each contribute to the ATP site. H117 functions as the Pros-phosphohistidine intermediate in the catalytic mechanism.

Belongs to the NDK family. In terms of assembly, homotetramer. Mg(2+) serves as cofactor.

The protein resides in the cytoplasm. It catalyses the reaction a 2'-deoxyribonucleoside 5'-diphosphate + ATP = a 2'-deoxyribonucleoside 5'-triphosphate + ADP. It carries out the reaction a ribonucleoside 5'-diphosphate + ATP = a ribonucleoside 5'-triphosphate + ADP. Its function is as follows. Major role in the synthesis of nucleoside triphosphates other than ATP. The ATP gamma phosphate is transferred to the NDP beta phosphate via a ping-pong mechanism, using a phosphorylated active-site intermediate. This is Nucleoside diphosphate kinase from Rickettsia typhi (strain ATCC VR-144 / Wilmington).